The sequence spans 184 residues: MYELAGELLTLSIMAFALGMDAFSVGLGMGMIQLRFRQIIYIGLVIGIFHMFMPLFGMLTGQLLSGWLGLLATYIGGALLLVLGLQMIIASIRKEDKPFIAPVGAGLVLFATSVSLDSFSVGLSLGIYGSHVWMTILLFGFFSMILTWLGLLLGKQVRSWVGSYSGALGGIILLAFGIKLLFPL.

The next 6 membrane-spanning stretches (helical) occupy residues 12-32, 39-59, 63-83, 99-119, 132-152, and 164-184; these read SIMA…MGMI, IIYI…FGML, LLSG…LLVL, FIAP…LDSF, VWMT…LGLL, and YSGA…LFPL.

The protein belongs to the MntP (TC 9.B.29) family.

Its subcellular location is the cell membrane. Probably functions as a manganese efflux pump. The sequence is that of Putative manganese efflux pump MntP from Bacillus pumilus (strain SAFR-032).